A 520-amino-acid polypeptide reads, in one-letter code: Glucose-6-phosphate isomerase (520 aa).

E327 serves as the catalytic Proton donor. Active-site residues include H358 and K486.

Belongs to the GPI family.

It is found in the cytoplasm. The catalysed reaction is alpha-D-glucose 6-phosphate = beta-D-fructose 6-phosphate. The protein operates within carbohydrate biosynthesis; gluconeogenesis. Its pathway is carbohydrate degradation; glycolysis; D-glyceraldehyde 3-phosphate and glycerone phosphate from D-glucose: step 2/4. In terms of biological role, catalyzes the reversible isomerization of glucose-6-phosphate to fructose-6-phosphate. The sequence is that of Glucose-6-phosphate isomerase from Bordetella avium (strain 197N).